Consider the following 376-residue polypeptide: Eugenol O-methyltransferase (376 aa).

Positions 219, 242, 263, and 276 each coordinate S-adenosyl-L-methionine. H280 functions as the Proton acceptor in the catalytic mechanism.

It belongs to the class I-like SAM-binding methyltransferase superfamily. Cation-independent O-methyltransferase family. COMT subfamily. As to quaternary structure, homodimer. Expressed predominantly in root hairs.

The enzyme catalyses (E)-isoeugenol + S-adenosyl-L-methionine = (E)-isomethyleugenol + S-adenosyl-L-homocysteine + H(+). Its function is as follows. O-methyltransferase. Substrate preference is eugenol &gt;&gt; orcinol monomethyl ether &gt; resorcinol monomethyl ether. This chain is Eugenol O-methyltransferase (EOMT), found in Sorghum bicolor (Sorghum).